We begin with the raw amino-acid sequence, 279 residues long: Probable cyclic nucleotide phosphodiesterase Psyc_2036 (279 aa).

Fe cation is bound by residues aspartate 23, histidine 25, aspartate 70, asparagine 100, histidine 179, histidine 218, and histidine 220. Residues histidine 25, aspartate 70, and 100–101 each bind AMP; that span reads NH. An AMP-binding site is contributed by histidine 220.

It belongs to the cyclic nucleotide phosphodiesterase class-III family. The cofactor is Fe(2+).

This chain is Probable cyclic nucleotide phosphodiesterase Psyc_2036, found in Psychrobacter arcticus (strain DSM 17307 / VKM B-2377 / 273-4).